Reading from the N-terminus, the 803-residue chain is Pesticidal crystal protein Cry13Aa (803 aa).

Belongs to the delta endotoxin family.

Its function is as follows. Endotoxin with nematicidal activity. The protein is Pesticidal crystal protein Cry13Aa (cry13Aa) of Bacillus thuringiensis.